The primary structure comprises 286 residues: 3-hydroxyanthranilate 3,4-dioxygenase (286 aa).

The segment at Met-1–Asn-160 is domain A (catalytic). O2 is bound at residue Arg-43. Fe cation-binding residues include His-47, Glu-53, and His-91. A substrate-binding site is contributed by Glu-53. Residues Arg-95 and Glu-105 each contribute to the substrate site. The linker stretch occupies residues Pro-161–Val-177. The domain B stretch occupies residues Met-178 to Gly-286.

Belongs to the 3-HAO family. Monomer. Fe(2+) serves as cofactor.

Its subcellular location is the cytoplasm. The protein resides in the cytosol. The enzyme catalyses 3-hydroxyanthranilate + O2 = (2Z,4Z)-2-amino-3-carboxymuconate 6-semialdehyde. It participates in cofactor biosynthesis; NAD(+) biosynthesis; quinolinate from L-kynurenine: step 3/3. Catalyzes the oxidative ring opening of 3-hydroxyanthranilate to 2-amino-3-carboxymuconate semialdehyde, which spontaneously cyclizes to quinolinate. The sequence is that of 3-hydroxyanthranilate 3,4-dioxygenase (Haao) from Rattus norvegicus (Rat).